We begin with the raw amino-acid sequence, 496 residues long: 3-octaprenyl-4-hydroxybenzoate carboxy-lyase (496 aa).

Asparagine 181 is a binding site for Mn(2+). Residues 184–186 (IYR), 198–200 (RWL), and 203–204 (RG) contribute to the prenylated FMN site. Glutamate 247 contributes to the Mn(2+) binding site. Aspartate 296 acts as the Proton donor in catalysis.

The protein belongs to the UbiD family. As to quaternary structure, homohexamer. Requires prenylated FMN as cofactor. The cofactor is Mn(2+).

Its subcellular location is the cell membrane. The enzyme catalyses a 4-hydroxy-3-(all-trans-polyprenyl)benzoate + H(+) = a 2-(all-trans-polyprenyl)phenol + CO2. The protein operates within cofactor biosynthesis; ubiquinone biosynthesis. Functionally, catalyzes the decarboxylation of 3-octaprenyl-4-hydroxy benzoate to 2-octaprenylphenol, an intermediate step in ubiquinone biosynthesis. In Azoarcus sp. (strain BH72), this protein is 3-octaprenyl-4-hydroxybenzoate carboxy-lyase.